Reading from the N-terminus, the 411-residue chain is G2/mitotic-specific cyclin cig2 (411 aa).

Residues 51-60 (RTVLSDVSNV) carry the Destruction box motif. A disordered region spans residues 57 to 89 (VSNVGKNNADEKDTKKAKRSFDESNLSTNEEAD). Positions 64 to 78 (NADEKDTKKAKRSFD) are enriched in basic and acidic residues. One can recognise a Cyclin N-terminal domain in the interval 139 to 265 (EIFEYIRKLD…MLNVLNFDLS (127 aa)). Residues 181–273 (SNFCLMPETL…LSYPSPLNFL (93 aa)) are interaction with pop1.

It belongs to the cyclin family. Cyclin AB subfamily. As to quaternary structure, associates with cdc2, res2 and rum1. Interacts with pop1 only when phosphorylated. In terms of processing, phosphorylated.

It localises to the nucleus. It is found in the cytoplasm. Its subcellular location is the cytoskeleton. The protein resides in the microtubule organizing center. The protein localises to the spindle pole body. Essential for the control of the cell cycle at the G2/M and G1/S (mitosis) transition. Interacts with the cdc2 protein kinase to form MPF. Interaction with res2 promotes the phosphorylation of res1 and inhibits MBF-dependent gene transcription. Forms an autoregulating feedback-inhibition loop with MBF which is important for normal regulation of the cell cycle. G2/M cyclins accumulate steadily during G2 and are abruptly destroyed at mitosis. Negatively regulates conjugation via interacting with cell cycle 'start' genes. Degraded by skp1, pop1 and pop2 in the G2 and M phases of the cell cycle. The polypeptide is G2/mitotic-specific cyclin cig2 (cig2) (Schizosaccharomyces pombe (strain 972 / ATCC 24843) (Fission yeast)).